The chain runs to 111 residues: DNA-directed RNA polymerase subunit Rpo11 (111 aa).

Belongs to the archaeal Rpo11/eukaryotic RPB11/RPC19 RNA polymerase subunit family. As to quaternary structure, part of the RNA polymerase complex.

The protein resides in the cytoplasm. It carries out the reaction RNA(n) + a ribonucleoside 5'-triphosphate = RNA(n+1) + diphosphate. In terms of biological role, DNA-dependent RNA polymerase (RNAP) catalyzes the transcription of DNA into RNA using the four ribonucleoside triphosphates as substrates. The chain is DNA-directed RNA polymerase subunit Rpo11 from Thermoplasma acidophilum (strain ATCC 25905 / DSM 1728 / JCM 9062 / NBRC 15155 / AMRC-C165).